A 510-amino-acid chain; its full sequence is uncharacterized protein (510 aa).

The first 19 residues, 1–19 (MLILLILYFLFLQLHIFDS), serve as a signal peptide directing secretion. The chain crosses the membrane as a helical span at residues 28 to 48 (IYIHYAICKFIFLLEIYKLIA).

It localises to the host membrane. This is an uncharacterized protein from Sulfolobus islandicus rod-shaped virus 1 (SIRV-1).